A 332-amino-acid chain; its full sequence is Phosphate acyltransferase (332 aa).

Belongs to the PlsX family. Homodimer. Probably interacts with PlsY.

The protein resides in the cytoplasm. The catalysed reaction is a fatty acyl-[ACP] + phosphate = an acyl phosphate + holo-[ACP]. It participates in lipid metabolism; phospholipid metabolism. Functionally, catalyzes the reversible formation of acyl-phosphate (acyl-PO(4)) from acyl-[acyl-carrier-protein] (acyl-ACP). This enzyme utilizes acyl-ACP as fatty acyl donor, but not acyl-CoA. The protein is Phosphate acyltransferase of Streptococcus sanguinis (strain SK36).